The chain runs to 132 residues: UPF0357 protein YCL012C (132 aa).

Positions 1–25 (MWDLFYFKVFFWVVLISLCIFMVHR) are cleaved as a signal peptide.

This sequence belongs to the UPF0357 family.

The protein is UPF0357 protein YCL012C (YCL012C) of Saccharomyces bayanus (Yeast).